Consider the following 483-residue polypeptide: Probable glycine dehydrogenase (decarboxylating) subunit 2 (483 aa).

K267 carries the post-translational modification N6-(pyridoxal phosphate)lysine.

It belongs to the GcvP family. C-terminal subunit subfamily. As to quaternary structure, the glycine cleavage system is composed of four proteins: P, T, L and H. In this organism, the P 'protein' is a heterodimer of two subunits. It depends on pyridoxal 5'-phosphate as a cofactor.

The catalysed reaction is N(6)-[(R)-lipoyl]-L-lysyl-[glycine-cleavage complex H protein] + glycine + H(+) = N(6)-[(R)-S(8)-aminomethyldihydrolipoyl]-L-lysyl-[glycine-cleavage complex H protein] + CO2. The glycine cleavage system catalyzes the degradation of glycine. The P protein binds the alpha-amino group of glycine through its pyridoxal phosphate cofactor; CO(2) is released and the remaining methylamine moiety is then transferred to the lipoamide cofactor of the H protein. The polypeptide is Probable glycine dehydrogenase (decarboxylating) subunit 2 (Kosmotoga olearia (strain ATCC BAA-1733 / DSM 21960 / TBF 19.5.1)).